A 489-amino-acid polypeptide reads, in one-letter code: Serine/threonine-protein kinase BSK3 (489 aa).

Gly-2 is lipidated: N-myristoyl glycine. A Protein kinase domain is found at 58–324 (EYIVSEHGEK…ETEVLSHVLM (267 aa)). Residues 64–72 (HGEKAPNVV) and Lys-86 each bind ATP. The active-site Proton acceptor is the Asp-180. Residue Ser-212 is modified to Phosphoserine.

It belongs to the protein kinase superfamily. Ser/Thr protein kinase family. Interacts with BRI1. Post-translationally, phosphorylated by BRI1 upon brassinolide (BL) treatment. Phosphorylated by ASK7/BIN2 and ASK9/BIL2.

It localises to the cell membrane. It carries out the reaction L-seryl-[protein] + ATP = O-phospho-L-seryl-[protein] + ADP + H(+). The catalysed reaction is L-threonyl-[protein] + ATP = O-phospho-L-threonyl-[protein] + ADP + H(+). Functionally, probable serine/threonine kinase that acts as a positive regulator of brassinosteroid (BR) signaling downstream of the receptor kinase BRI1. Mediates signal transduction from BRI1 by functioning as substrate of BRI1. Functions redundantly with BSK4, BSK6, BSK7 and BSK8. This Arabidopsis thaliana (Mouse-ear cress) protein is Serine/threonine-protein kinase BSK3.